Consider the following 326-residue polypeptide: Protein spaetzle (326 aa).

The signal sequence occupies residues 1-25 (MMTPMWISLFKVLLLLFAFFATYEA). N-linked (GlcNAc...) asparagine glycosylation occurs at N48. Residues 56 to 82 (FMPIPTQHDDPTQKQKQNQNQSPIPET) are disordered. Over residues 69 to 80 (KQKQNQNQSPIP) the composition is skewed to polar residues. N-linked (GlcNAc...) asparagine glycans are attached at residues N114 and N164. A disordered region spans residues 152-174 (YRPPQSPARPLRNDTKEHNPCAK). Residues 162–174 (LRNDTKEHNPCAK) are compositionally biased toward basic and acidic residues. One can recognise a Spaetzle domain in the interval 228-322 (FLCRSIRKLV…FKIPSCCKCA (95 aa)). 3 disulfide bridges follow: C230-C288, C267-C319, and C274-C321.

In terms of assembly, homodimer; disulfide-linked. In the presence of Tl, crystal structures show one Tl molecule bound to a spaetzle C-106 homodimer. However, the active complex probably consists of two Tl molecules bound to a spaetzle C-106 homodimer. This is supported by in vitro experiments which also show binding of the spaetzle C-106 dimer to 2 Tl receptors. Ligand binding induces conformational changes in the extracellular domain of Tl. This may enable a secondary homodimerization interface at the C-terminus of the Tl extracellular domain. During embryonic development proteolytically processed by activated ea/easter; ea cleaves the signal peptide and also generates the C-terminal 12 kDa active ligand for the Toll receptor, C-106 (except for isoform 8.24 and isoform 11.27 as they do not contain the cleavage site). During the immune response, cleaved in the same manner by SPE. In terms of processing, extracellular forms of isoform 8.19 and isoform 11.7 are glycosylated.

It localises to the secreted. The activated form, spaetzle C-106, acts as a ligand for the Toll receptor. Binding to Toll activates the Toll signaling pathway and induces expression of the antifungal peptide drosomycin. Component of the extracellular signaling pathway that establishes dorsal-ventral polarity in the embryo. This is Protein spaetzle from Drosophila melanogaster (Fruit fly).